A 384-amino-acid polypeptide reads, in one-letter code: Urea transporter 1 (384 aa).

The interval 1–23 is disordered; it reads MDDNPTAVKLDQGGNQAPQGQGR. 5 helical membrane-spanning segments follow: residues 61–81, 85–105, 111–131, 138–158, and 168–188; these read ISQV…VGLL, PWCA…ALLL, AITA…MAIY, FWWL…FSSA, and LPVF…ATGH. Residue Asn206 is glycosylated (N-linked (GlcNAc...) asparagine). The next 3 helical transmembrane spans lie at 237-257, 279-299, and 327-347; these read GGIF…HAAI, GLWG…FMAL, and VVGL…FLLL.

The protein belongs to the urea transporter family. Homotrimer; each subunit contains a pore through which urea permeates. Identified in a complex with STOM.

The protein localises to the cell membrane. It is found in the basolateral cell membrane. The enzyme catalyses urea(in) = urea(out). Functionally, mediates the transport of urea driven by a concentration gradient across the cell membranes of erythrocytes and the renal inner medullary collecting duct which is critical to the urinary concentrating mechanism. Facilitates water transport in erythrocytes. This Capra hircus (Goat) protein is Urea transporter 1 (SLC14A1).